We begin with the raw amino-acid sequence, 451 residues long: Phosphoglucosamine mutase (451 aa).

The Phosphoserine intermediate role is filled by Ser101. Residues Ser101, Asp240, Asp242, and Asp244 each contribute to the Mg(2+) site. A Phosphoserine modification is found at Ser101.

The protein belongs to the phosphohexose mutase family. Mg(2+) serves as cofactor. Post-translationally, activated by phosphorylation.

The catalysed reaction is alpha-D-glucosamine 1-phosphate = D-glucosamine 6-phosphate. Functionally, catalyzes the conversion of glucosamine-6-phosphate to glucosamine-1-phosphate. This is Phosphoglucosamine mutase from Streptococcus pyogenes serotype M3 (strain SSI-1).